Consider the following 520-residue polypeptide: J protein JJJ2 (520 aa).

One can recognise a J domain in the interval 7–71; that stretch reads TYYSVLGLPT…SSKQEYDAIL (65 aa). Disordered stretches follow at residues 82–257 and 389–409; these read LGYK…DLQN and FESSTGTMENHRSDFNLRGRP. Low complexity predominate over residues 91–100; the sequence is QNQSNNLNQQ. The span at 152-182 shows a compositional bias: polar residues; that stretch reads TSKNSKEQQGSQETTNTSENLQRNAKGNKNN. Residues 397–409 show a composition bias toward basic and acidic residues; that stretch reads ENHRSDFNLRGRP.

It localises to the cytoplasm. The protein resides in the nucleus. The polypeptide is J protein JJJ2 (JJJ2) (Vanderwaltozyma polyspora (strain ATCC 22028 / DSM 70294 / BCRC 21397 / CBS 2163 / NBRC 10782 / NRRL Y-8283 / UCD 57-17) (Kluyveromyces polysporus)).